The primary structure comprises 436 residues: Chaperone SurA (436 aa).

Positions 1–30 (MKFFQRPERRLKQWGLALLLAASALLPARA) are cleaved as a signal peptide. PpiC domains are found at residues 180–281 (ETEY…KLVD) and 291–389 (VTQT…QVLE).

Its subcellular location is the periplasm. The catalysed reaction is [protein]-peptidylproline (omega=180) = [protein]-peptidylproline (omega=0). In terms of biological role, chaperone involved in the correct folding and assembly of outer membrane proteins. Recognizes specific patterns of aromatic residues and the orientation of their side chains, which are found more frequently in integral outer membrane proteins. May act in both early periplasmic and late outer membrane-associated steps of protein maturation. The chain is Chaperone SurA from Thiobacillus denitrificans (strain ATCC 25259 / T1).